A 283-amino-acid polypeptide reads, in one-letter code: Acetylglutamate kinase (283 aa).

Residues 63 to 64, Arg-85, and Asn-179 each bind substrate; that span reads GG.

Belongs to the acetylglutamate kinase family. ArgB subfamily.

It localises to the cytoplasm. The enzyme catalyses N-acetyl-L-glutamate + ATP = N-acetyl-L-glutamyl 5-phosphate + ADP. The protein operates within amino-acid biosynthesis; L-arginine biosynthesis; N(2)-acetyl-L-ornithine from L-glutamate: step 2/4. Catalyzes the ATP-dependent phosphorylation of N-acetyl-L-glutamate. This Clostridium kluyveri (strain NBRC 12016) protein is Acetylglutamate kinase.